The following is a 445-amino-acid chain: MSKNLYIKTYGCQMNVYDSVKMQDLLYPFGYEPTENIEEADVIILNTCHIREKAAEKTYSELGRIKKLQDTRKKQGLNSAIIVVAGCVAQAEGEEIFTRTPYVDIVVGPQSYYNLPELISKIVRHAKHLIDLDFVEEAKFDNLPEQLYPQGASSFISVQEGCDKFCTFCVVPYTRGAEFSRNVEQVYREALQVVSGGAKEIMLLGQNVNAYNWKGSADKIFSLADLLKHLAQIPNLERLRYMTSHPIDMTDDLIQLHGTEPKLMPFLHLPVQSGSNKILKAMNRKHDREYYFDIINRLREARPDIVLSSDFIVGFPGETDEDFEDTLDLVRRVKYGQCYSFKYSPRPGTPGATRTDQIPEHIKSERLTILQKELMDQQLACNESCVGSTIKVLFDRSGKFDDQIIGKTIYMQSVYIQNPNKSLLGKIIDVKITKASLNSLTGEIL.

Residues 3-124 (KNLYIKTYGC…LPELISKIVR (122 aa)) form the MTTase N-terminal domain. Residues Cys-12, Cys-48, Cys-87, Cys-162, Cys-166, and Cys-169 each contribute to the [4Fe-4S] cluster site. One can recognise a Radical SAM core domain in the interval 148–380 (YPQGASSFIS…QKELMDQQLA (233 aa)). The TRAM domain maps to 383–445 (ESCVGSTIKV…SLNSLTGEIL (63 aa)).

This sequence belongs to the methylthiotransferase family. MiaB subfamily. As to quaternary structure, monomer. It depends on [4Fe-4S] cluster as a cofactor.

The protein localises to the cytoplasm. It catalyses the reaction N(6)-dimethylallyladenosine(37) in tRNA + (sulfur carrier)-SH + AH2 + 2 S-adenosyl-L-methionine = 2-methylsulfanyl-N(6)-dimethylallyladenosine(37) in tRNA + (sulfur carrier)-H + 5'-deoxyadenosine + L-methionine + A + S-adenosyl-L-homocysteine + 2 H(+). Its function is as follows. Catalyzes the methylthiolation of N6-(dimethylallyl)adenosine (i(6)A), leading to the formation of 2-methylthio-N6-(dimethylallyl)adenosine (ms(2)i(6)A) at position 37 in tRNAs that read codons beginning with uridine. The polypeptide is tRNA-2-methylthio-N(6)-dimethylallyladenosine synthase (Rickettsia akari (strain Hartford)).